Reading from the N-terminus, the 146-residue chain is VQWTAEEKQLITGLWGKVNVAECGGEALARLLIVYPWTQRFFASFGNLSSPTAVLGNPKVQAHGKKVLTSFGEAVKNLDSIKNTFSQLSELHCDKLHVDPENFRLLGDILVVVLAAHFGKDFTPDCQAAWQKLVRVVAHALARKYH.

One can recognise a Globin domain in the interval 2-146 (QWTAEEKQLI…VAHALARKYH (145 aa)). Positions 63 and 92 each coordinate heme b.

This sequence belongs to the globin family. As to quaternary structure, heterotetramer of two alpha chains and two beta chains. Red blood cells.

Its function is as follows. Involved in oxygen transport from the lung to the various peripheral tissues. This is Hemoglobin subunit beta (HBB) from Passer montanus (Eurasian tree sparrow).